A 3971-amino-acid chain; its full sequence is Mycosubtilin synthase subunit A (3971 aa).

Residues 160–479 (EPEADELAFI…ELEDIDLGRV (320 aa)) are acyl-CoA ligase. One can recognise a Carrier 1 domain in the interval 578 to 653 (TPIHEIETAL…DLAAFLVENH (76 aa)). Serine 613 bears the O-(pantetheine 4'-phosphoryl)serine mark. In terms of domain architecture, Ketosynthase family 3 (KS3) spans 669–1092 (SKDIAIIGMS…GTNAHVVLEE (424 aa)). Catalysis depends on for beta-ketoacyl synthase activity residues cysteine 843, histidine 974, and histidine 1014. The 76-residue stretch at 1290 to 1365 (THIESFLKTV…SVVDYLAENV (76 aa)) folds into the Carrier 2 domain. Residue serine 1324 is modified to O-(pantetheine 4'-phosphoryl)serine. The tract at residues 1434–1456 (ESEISQDKTSLSPKSVTAKKNSA) is disordered. The span at 1440–1456 (DKTSLSPKSVTAKKNSA) shows a compositional bias: polar residues. The interval 1529 to 1856 (IIAERSDGSR…SYFEQSQVPI (328 aa)) is GSA-AT. Lysine 1759 bears the N6-(pyridoxal phosphate)lysine mark. The segment at 1921 to 1942 (GGFIPEGPDSPNDGGHKEPETY) is disordered. The tract at residues 1938 to 2240 (EPETYELSPE…NMVPVKNTAS (303 aa)) is condensation 1. Residues 2405-2480 (EPENETELQI…ELANFIRGEK (76 aa)) form the Carrier 3 domain. Serine 2440 carries the post-translational modification O-(pantetheine 4'-phosphoryl)serine. Residues 2492-2781 (QKAFYRTSPA…QTMGIRTKPQ (290 aa)) are condensation 2. Residues 2937 to 3823 (PHNDTVCQWF…RNHPAGRKIF (887 aa)) are domain 1 (asparagine-activating). An adenylation 1 region spans residues 2967 to 3364 (TYGQLNERVN…KVEAVQKAVV (398 aa)). Positions 3442–3517 (PPGNEVESKL…QLANMALRME (76 aa)) constitute a Carrier 4 domain. An O-(pantetheine 4'-phosphoryl)serine modification is found at serine 3477. The interval 3529-3818 (KISYYPVSSA…NTLVIRNHPA (290 aa)) is condensation 3.

This sequence belongs to the ATP-dependent AMP-binding enzyme family. Pyridoxal 5'-phosphate serves as cofactor. Pantetheine 4'-phosphate is required as a cofactor.

In terms of biological role, this protein is a multifunctional enzyme, able to activate a long chain fatty acid and link it with the amino acid Asn as part of the synthesis of mycosubtilin. The activation sites consist of individual domains. This chain is Mycosubtilin synthase subunit A (mycA), found in Bacillus subtilis.